A 396-amino-acid polypeptide reads, in one-letter code: Exodeoxyribonuclease 7 large subunit (396 aa).

It belongs to the XseA family. Heterooligomer composed of large and small subunits.

The protein localises to the cytoplasm. It carries out the reaction Exonucleolytic cleavage in either 5'- to 3'- or 3'- to 5'-direction to yield nucleoside 5'-phosphates.. Functionally, bidirectionally degrades single-stranded DNA into large acid-insoluble oligonucleotides, which are then degraded further into small acid-soluble oligonucleotides. The protein is Exodeoxyribonuclease 7 large subunit of Clostridium tetani (strain Massachusetts / E88).